The sequence spans 120 residues: uncharacterized protein (120 aa).

This is an uncharacterized protein from Archaeoglobus fulgidus (strain ATCC 49558 / DSM 4304 / JCM 9628 / NBRC 100126 / VC-16).